We begin with the raw amino-acid sequence, 197 residues long: MDNLKTLVVQKRLDLGKGPNRRLHKKNLIPGIFYTSSGKNIPIQLPELPFTKIFSEVGRTTVFNLKIESDKENITHPVIIWELQYYPVKNRFMHVDLYGVELNKPIKIVVPLEFTGTAKGTKVGGKLETYREQLTLIANPLDIPSKITLDISDLDIGKSIYVADLKLPEGVKTSYDTNYAIVSVIMPGGNTATEQEG.

Belongs to the bacterial ribosomal protein bL25 family. CTC subfamily. In terms of assembly, part of the 50S ribosomal subunit; part of the 5S rRNA/L5/L18/L25 subcomplex. Contacts the 5S rRNA. Binds to the 5S rRNA independently of L5 and L18.

Functionally, this is one of the proteins that binds to the 5S RNA in the ribosome where it forms part of the central protuberance. The protein is Large ribosomal subunit protein bL25 of Lawsonia intracellularis (strain PHE/MN1-00).